The chain runs to 496 residues: Cytochrome P450 71D179 (496 aa).

The helical; Signal-anchor for type II membrane protein transmembrane segment at 1–21 threads the bilayer; that stretch reads MDISISWVVIIVSVLSYLILM. Cys-435 is a binding site for heme.

It belongs to the cytochrome P450 family. It depends on heme as a cofactor.

The protein resides in the membrane. The protein operates within secondary metabolite biosynthesis; terpenoid biosynthesis. Functionally, involved in the biosynthesis of phenolic monoterpenes natural products thymol and carvacrol which have a broad range of biological activities acting as antimicrobial compounds, insecticides, antioxidants and pharmaceutical agents. Catalyzes probably the C3-hydroxylation of gamma-terpinene to produce thymol. This Thymus vulgaris (Thyme) protein is Cytochrome P450 71D179.